We begin with the raw amino-acid sequence, 303 residues long: MCTLMHKHDDSLFSNSFGFLRLPLEFYPYTRHNDWVITGVPFDIATSGRSGSRFGPASIRKASINLAWENCRWPWNFDIRQKLKIIDCGDLIYKSGNVQDFTNILQKHIENLLRFRKKILLLGGDHYITLPVLRAYSKFFGTISIIHFDAHADYYDNNNQYDHGAVILYALHEKLINPNRSVQIGIRTEYDKNFGFTVLDAEYVNTTAVHVLINQIVSVIQNRPVYLTFDIDCLDPSVAPGTGTPVIGGLTTSCALQIIRGFQKLNIIGIDIVEVAPVYDCAQITALAAATLGLEMLYTQVKF.

Mn(2+)-binding residues include H126, D149, H151, D153, D230, and D232.

It belongs to the arginase family. Agmatinase subfamily. It depends on Mn(2+) as a cofactor.

It catalyses the reaction agmatine + H2O = urea + putrescine. Catalyzes the formation of putrescine from agmatine. This is Agmatinase (speB) from Blochmanniella floridana.